Consider the following 365-residue polypeptide: Phosphoserine aminotransferase (365 aa).

Arginine 46 contributes to the L-glutamate binding site. Pyridoxal 5'-phosphate contacts are provided by residues 80-81, tryptophan 106, threonine 157, aspartate 177, and glutamine 200; that span reads AT. An N6-(pyridoxal phosphate)lysine modification is found at lysine 201. 242 to 243 provides a ligand contact to pyridoxal 5'-phosphate; that stretch reads NT.

It belongs to the class-V pyridoxal-phosphate-dependent aminotransferase family. SerC subfamily. As to quaternary structure, homodimer. Pyridoxal 5'-phosphate serves as cofactor.

It is found in the cytoplasm. It catalyses the reaction O-phospho-L-serine + 2-oxoglutarate = 3-phosphooxypyruvate + L-glutamate. The enzyme catalyses 4-(phosphooxy)-L-threonine + 2-oxoglutarate = (R)-3-hydroxy-2-oxo-4-phosphooxybutanoate + L-glutamate. It functions in the pathway amino-acid biosynthesis; L-serine biosynthesis; L-serine from 3-phospho-D-glycerate: step 2/3. The protein operates within cofactor biosynthesis; pyridoxine 5'-phosphate biosynthesis; pyridoxine 5'-phosphate from D-erythrose 4-phosphate: step 3/5. Catalyzes the reversible conversion of 3-phosphohydroxypyruvate to phosphoserine and of 3-hydroxy-2-oxo-4-phosphonooxybutanoate to phosphohydroxythreonine. The sequence is that of Phosphoserine aminotransferase from Leptospira biflexa serovar Patoc (strain Patoc 1 / Ames).